The sequence spans 132 residues: Small ribosomal subunit protein uS8 (132 aa).

In terms of assembly, part of the 30S ribosomal subunit. Contacts proteins S5 and S12. A modified and unmodified form exist; the nature of the modification(s) is unknown.

In terms of biological role, one of the primary rRNA binding proteins, it binds directly to 16S rRNA central domain where it helps coordinate assembly of the platform of the 30S subunit. This chain is Small ribosomal subunit protein uS8, found in Rhodopseudomonas palustris (strain ATCC BAA-98 / CGA009).